A 199-amino-acid polypeptide reads, in one-letter code: ATP-dependent Clp protease proteolytic subunit (199 aa).

Residue S98 is the Nucleophile of the active site. H123 is a catalytic residue.

Belongs to the peptidase S14 family. As to quaternary structure, fourteen ClpP subunits assemble into 2 heptameric rings which stack back to back to give a disk-like structure with a central cavity, resembling the structure of eukaryotic proteasomes.

The protein localises to the cytoplasm. It catalyses the reaction Hydrolysis of proteins to small peptides in the presence of ATP and magnesium. alpha-casein is the usual test substrate. In the absence of ATP, only oligopeptides shorter than five residues are hydrolyzed (such as succinyl-Leu-Tyr-|-NHMec, and Leu-Tyr-Leu-|-Tyr-Trp, in which cleavage of the -Tyr-|-Leu- and -Tyr-|-Trp bonds also occurs).. Functionally, cleaves peptides in various proteins in a process that requires ATP hydrolysis. Has a chymotrypsin-like activity. Plays a major role in the degradation of misfolded proteins. The polypeptide is ATP-dependent Clp protease proteolytic subunit (Clostridium botulinum (strain Eklund 17B / Type B)).